Here is a 312-residue protein sequence, read N- to C-terminus: L-lactate dehydrogenase (312 aa).

3 residues coordinate NAD(+): V14, D35, and Y66. Positions 83 and 90 each coordinate substrate. NAD(+) is bound by residues S103, A120–N122, and S145. Residue N122–D125 coordinates substrate. D150–R153 is a binding site for substrate. The Proton acceptor role is filled by H177. Y220 is subject to Phosphotyrosine. T229 lines the substrate pocket.

The protein belongs to the LDH/MDH superfamily. LDH family. In terms of assembly, homotetramer.

It is found in the cytoplasm. It carries out the reaction (S)-lactate + NAD(+) = pyruvate + NADH + H(+). Its pathway is fermentation; pyruvate fermentation to lactate; (S)-lactate from pyruvate: step 1/1. Functionally, catalyzes the conversion of lactate to pyruvate. This Mycoplasma genitalium (strain ATCC 33530 / DSM 19775 / NCTC 10195 / G37) (Mycoplasmoides genitalium) protein is L-lactate dehydrogenase.